A 528-amino-acid polypeptide reads, in one-letter code: D-3-phosphoglycerate dehydrogenase (528 aa).

NAD(+) contacts are provided by residues 151–152 (RI), Asp-171, 230–232 (AAR), and Asp-256. The active site involves Arg-232. Glu-261 is a catalytic residue. Catalysis depends on His-279, which acts as the Proton donor. Residue 279–282 (HLGA) coordinates NAD(+). One can recognise an ACT domain in the interval 455–527 (NLIIHYVDRP…DAYKLEVVDL (73 aa)).

This sequence belongs to the D-isomer specific 2-hydroxyacid dehydrogenase family.

It catalyses the reaction (2R)-3-phosphoglycerate + NAD(+) = 3-phosphooxypyruvate + NADH + H(+). It carries out the reaction (R)-2-hydroxyglutarate + NAD(+) = 2-oxoglutarate + NADH + H(+). It participates in amino-acid biosynthesis; L-serine biosynthesis; L-serine from 3-phospho-D-glycerate: step 1/3. Catalyzes the reversible oxidation of 3-phospho-D-glycerate to 3-phosphonooxypyruvate, the first step of the phosphorylated L-serine biosynthesis pathway. Also catalyzes the reversible oxidation of 2-hydroxyglutarate to 2-oxoglutarate. This Mycobacterium bovis (strain ATCC BAA-935 / AF2122/97) protein is D-3-phosphoglycerate dehydrogenase (serA).